Here is a 473-residue protein sequence, read N- to C-terminus: Flavonol 3-O-glucosyltransferase UGT89B1 (473 aa).

H25 functions as the Proton acceptor in the catalytic mechanism. Residue H25 coordinates an anthocyanidin. The Charge relay role is filled by D127. Positions 348, 350, 365, 368, 369, 370, and 373 each coordinate UDP-alpha-D-glucose. Residue A388 participates in an anthocyanidin binding. Positions 389 and 390 each coordinate UDP-alpha-D-glucose.

The protein belongs to the UDP-glycosyltransferase family.

It catalyses the reaction a flavonol + UDP-alpha-D-glucose = a flavonol 3-O-beta-D-glucoside + UDP + H(+). The catalysed reaction is a 7-O-hydroxy-flavonol + UDP-alpha-D-glucose = a flavonol 7-O-beta-D-glucoside + UDP + H(+). In terms of biological role, possesses quercetin 3-O-glucosyltransferase, 7-O-glucosyltransferase and 4'-O-glucosyltransferase activities in vitro. Also active in vitro on benzoates and benzoate derivatives. The chain is Flavonol 3-O-glucosyltransferase UGT89B1 from Arabidopsis thaliana (Mouse-ear cress).